A 698-amino-acid chain; its full sequence is DNA ligase (698 aa).

NAD(+)-binding positions include Asp-47–Asp-51, Ser-96–Leu-97, and Glu-128. The active-site N6-AMP-lysine intermediate is the Lys-130. NAD(+) is bound by residues Arg-151, Glu-186, Lys-303, and Lys-327. The Zn(2+) site is built by Cys-422, Cys-425, Cys-440, and Cys-446. Residues Gly-620 to Glu-698 form the BRCT domain.

It belongs to the NAD-dependent DNA ligase family. LigA subfamily. The cofactor is Mg(2+). Mn(2+) is required as a cofactor.

It carries out the reaction NAD(+) + (deoxyribonucleotide)n-3'-hydroxyl + 5'-phospho-(deoxyribonucleotide)m = (deoxyribonucleotide)n+m + AMP + beta-nicotinamide D-nucleotide.. DNA ligase that catalyzes the formation of phosphodiester linkages between 5'-phosphoryl and 3'-hydroxyl groups in double-stranded DNA using NAD as a coenzyme and as the energy source for the reaction. It is essential for DNA replication and repair of damaged DNA. The chain is DNA ligase from Orientia tsutsugamushi (strain Boryong) (Rickettsia tsutsugamushi).